The primary structure comprises 209 residues: Large ribosomal subunit protein uL3 (209 aa).

Positions 126-148 are disordered; sequence HGQSRGPMAHGSRYHRRPGSMGP.

The protein belongs to the universal ribosomal protein uL3 family. As to quaternary structure, part of the 50S ribosomal subunit. Forms a cluster with proteins L14 and L19.

One of the primary rRNA binding proteins, it binds directly near the 3'-end of the 23S rRNA, where it nucleates assembly of the 50S subunit. This Listeria monocytogenes serotype 4b (strain CLIP80459) protein is Large ribosomal subunit protein uL3.